The primary structure comprises 232 residues: Large ribosomal subunit protein uL1 (232 aa).

The protein belongs to the universal ribosomal protein uL1 family. As to quaternary structure, part of the 50S ribosomal subunit.

Binds directly to 23S rRNA. The L1 stalk is quite mobile in the ribosome, and is involved in E site tRNA release. Functionally, protein L1 is also a translational repressor protein, it controls the translation of the L11 operon by binding to its mRNA. The sequence is that of Large ribosomal subunit protein uL1 from Methylorubrum extorquens (strain CM4 / NCIMB 13688) (Methylobacterium extorquens).